The sequence spans 234 residues: 2-C-methyl-D-erythritol 4-phosphate cytidylyltransferase (234 aa).

This sequence belongs to the IspD/TarI cytidylyltransferase family. IspD subfamily.

The catalysed reaction is 2-C-methyl-D-erythritol 4-phosphate + CTP + H(+) = 4-CDP-2-C-methyl-D-erythritol + diphosphate. Its pathway is isoprenoid biosynthesis; isopentenyl diphosphate biosynthesis via DXP pathway; isopentenyl diphosphate from 1-deoxy-D-xylulose 5-phosphate: step 2/6. Its function is as follows. Catalyzes the formation of 4-diphosphocytidyl-2-C-methyl-D-erythritol from CTP and 2-C-methyl-D-erythritol 4-phosphate (MEP). The polypeptide is 2-C-methyl-D-erythritol 4-phosphate cytidylyltransferase (Pseudomonas aeruginosa (strain ATCC 15692 / DSM 22644 / CIP 104116 / JCM 14847 / LMG 12228 / 1C / PRS 101 / PAO1)).